The following is a 420-amino-acid chain: Melatonin receptor type 1C (420 aa).

Residues M1–A34 are Extracellular-facing. N-linked (GlcNAc...) asparagine glycosylation is present at N5. The helical transmembrane segment at L35–L55 threads the bilayer. The Cytoplasmic portion of the chain corresponds to S56–S73. Residues L74 to F94 form a helical membrane-spanning segment. Residues Q95–Q106 lie on the Extracellular side of the membrane. The cysteines at positions 105 and 182 are disulfide-linked. A helical transmembrane segment spans residues I107 to A127. Over I128–Y152 the chain is Cytoplasmic. A helical transmembrane segment spans residues L153–L173. The Extracellular segment spans residues Q174–Y192. A helical transmembrane segment spans residues T193–L213. Residues R214–M245 lie on the Cytoplasmic side of the membrane. Residues F246 to V266 traverse the membrane as a helical segment. Over A267–E279 the chain is Extracellular. The helical transmembrane segment at W280–L303 threads the bilayer. Residues N304–R420 are Cytoplasmic-facing.

Belongs to the G-protein coupled receptor 1 family. As to expression, moderately expressed in dermal melanophores.

It is found in the cell membrane. High affinity receptor for melatonin. Likely to mediate the potent effects of melatonin on pigment aggregation in melanophores. The activity of this receptor is mediated by pertussis toxin sensitive G proteins that inhibit adenylate cyclase activity. The sequence is that of Melatonin receptor type 1C (mtnr1c) from Xenopus laevis (African clawed frog).